The primary structure comprises 243 residues: Ribosomal RNA small subunit methyltransferase J (243 aa).

S-adenosyl-L-methionine contacts are provided by residues 112–113 (ER) and aspartate 164.

The protein belongs to the methyltransferase superfamily. RsmJ family.

It is found in the cytoplasm. It carries out the reaction guanosine(1516) in 16S rRNA + S-adenosyl-L-methionine = N(2)-methylguanosine(1516) in 16S rRNA + S-adenosyl-L-homocysteine + H(+). Specifically methylates the guanosine in position 1516 of 16S rRNA. The chain is Ribosomal RNA small subunit methyltransferase J from Legionella pneumophila (strain Lens).